The primary structure comprises 26 residues: Conotoxin reg6(gamma) (26 aa).

Residues 1–12 (RVLEPGXEDPDV) show a composition bias toward acidic residues. The segment at 1 to 26 (RVLEPGXEDPDVGEPAGEYEHHLLEX) is disordered. 4-carboxyglutamate is present on Glu-4. Pro-5 bears the 4-hydroxyproline mark. Glu-8 bears the 4-carboxyglutamate mark. At Pro-10 the chain carries 4-hydroxyproline. Glu-14 bears the 4-carboxyglutamate mark. Pro-15 is modified (4-hydroxyproline). Glu-18, Glu-20, and Glu-25 each carry 4-carboxyglutamate.

In terms of tissue distribution, expressed by the venom duct.

It localises to the secreted. This chain is Conotoxin reg6(gamma), found in Conus regius (Crown cone).